The primary structure comprises 541 residues: Tyrosine-protein kinase Yes (541 aa).

Over residues 1 to 20 (MGCIKSKEDKGPAMKYRTDN) the composition is skewed to basic and acidic residues. Residues 1–43 (MGCIKSKEDKGPAMKYRTDNTPEPISSHVSHYGSDSSQATQSP) are disordered. Gly2 carries N-myristoyl glycine lipidation. Cys3 carries the S-palmitoyl cysteine; in membrane form lipid modification. Over residues 26–37 (SSHVSHYGSDSS) the composition is skewed to low complexity. The 62-residue stretch at 89 to 150 (GGVTVFVALY…PSNYVAPADS (62 aa)) folds into the SH3 domain. In terms of domain architecture, SH2 spans 156 to 253 (WYFGKMGRKD…GLCHKLTTVC (98 aa)). Positions 275-528 (LRLEVKLGQG…YIQSFLEDYF (254 aa)) constitute a Protein kinase domain. Residues 281–289 (LGQGCFGEV) and Lys303 contribute to the ATP site. The active-site Proton acceptor is Asp394. A Phosphotyrosine; by autocatalysis modification is found at Tyr424. Tyr535 is modified (phosphotyrosine; by CSK).

The protein belongs to the protein kinase superfamily. Tyr protein kinase family. SRC subfamily. Post-translationally, autophosphorylation at Tyr-424 maintains enzyme activity. In terms of processing, palmitoylation at Cys-3 promotes membrane localization.

It localises to the cell membrane. The protein localises to the cytoplasm. It is found in the cytoskeleton. The protein resides in the microtubule organizing center. Its subcellular location is the centrosome. It localises to the cytosol. The protein localises to the cell junction. It carries out the reaction L-tyrosyl-[protein] + ATP = O-phospho-L-tyrosyl-[protein] + ADP + H(+). In terms of biological role, non-receptor protein tyrosine kinase that is involved in the regulation of cell growth and survival, apoptosis, cell-cell adhesion, cytoskeleton remodeling, differentiation, G2/M progression and cytokinesis. This is Tyrosine-protein kinase Yes (YES1) from Gallus gallus (Chicken).